The chain runs to 341 residues: Glyceraldehyde-3-phosphate dehydrogenase 2 (341 aa).

Residues Arg12–Ile13, Arg78, and Thr120 each bind NAD(+). D-glyceraldehyde 3-phosphate contacts are provided by residues Ser152–Thr154 and Thr183. The Nucleophile role is filled by Cys153. Asn184 serves as a coordination point for NAD(+). D-glyceraldehyde 3-phosphate contacts are provided by residues Arg198, Thr211–Gly212, and Arg234. Asn313 is a binding site for NAD(+).

This sequence belongs to the glyceraldehyde-3-phosphate dehydrogenase family. As to quaternary structure, homotetramer.

The protein localises to the cytoplasm. It carries out the reaction D-glyceraldehyde 3-phosphate + phosphate + NAD(+) = (2R)-3-phospho-glyceroyl phosphate + NADH + H(+). It participates in carbohydrate degradation; glycolysis; pyruvate from D-glyceraldehyde 3-phosphate: step 1/5. Functionally, catalyzes the oxidative phosphorylation of glyceraldehyde 3-phosphate (G3P) to 1,3-bisphosphoglycerate (BPG) using the cofactor NAD. The first reaction step involves the formation of a hemiacetal intermediate between G3P and a cysteine residue, and this hemiacetal intermediate is then oxidized to a thioester, with concomitant reduction of NAD to NADH. The reduced NADH is then exchanged with the second NAD, and the thioester is attacked by a nucleophilic inorganic phosphate to produce BPG. The protein is Glyceraldehyde-3-phosphate dehydrogenase 2 (gapA2) of Staphylococcus aureus (strain COL).